A 343-amino-acid chain; its full sequence is Ribosomal RNA small subunit methyltransferase C (343 aa).

This sequence belongs to the methyltransferase superfamily. RsmC family. Monomer.

It localises to the cytoplasm. It catalyses the reaction guanosine(1207) in 16S rRNA + S-adenosyl-L-methionine = N(2)-methylguanosine(1207) in 16S rRNA + S-adenosyl-L-homocysteine + H(+). Functionally, specifically methylates the guanine in position 1207 of 16S rRNA in the 30S particle. This Escherichia coli (strain 55989 / EAEC) protein is Ribosomal RNA small subunit methyltransferase C.